Reading from the N-terminus, the 173-residue chain is Large ribosomal subunit protein uL29c (173 aa).

The N-terminal 60 residues, 1–60, are a transit peptide targeting the chloroplast; the sequence is MLSLSIATPGTAAIFRRGTASATSTSSSFHGVRIQHQVSARVPAAATISSSSPKPSVVMM. The segment at 143-173 is disordered; sequence KKSIVPRPPPSLKKLQEEEAAEEAAEAAKSA. Phosphoserine is present on Ser172.

It belongs to the universal ribosomal protein uL29 family. As to quaternary structure, part of the 50S ribosomal subunit.

Its subcellular location is the plastid. The protein resides in the chloroplast. This Arabidopsis thaliana (Mouse-ear cress) protein is Large ribosomal subunit protein uL29c (RPL29).